We begin with the raw amino-acid sequence, 518 residues long: DNA nucleotidylexotransferase (518 aa).

The Nuclear localization signal signature appears at 11–17 (FGKKRQK). In terms of domain architecture, BRCT spans 27-124 (IYEIKFHEFV…KPVDTKGKYQ (98 aa)). A mediates interaction with DNTTIP2 region spans residues 153–518 (SQYACQRRTT…EYIQPSERNA (366 aa)). The interval 260 to 264 (VGLKT) is involved in DNA binding. Residues 335-340 (GFRRGK) and 344-347 (HDVD) each bind a 2'-deoxyribonucleoside 5'-triphosphate. Mg(2+) contacts are provided by D345, D347, and D442. 457–458 (GW) is an a 2'-deoxyribonucleoside 5'-triphosphate binding site.

The protein belongs to the DNA polymerase type-X family. As to quaternary structure, interacts with PRP19 and DNTTIP1. Interacts with TRERF1. Forms a ternary complex with DNTTIP2 and core histone. Released from this complex by PCNA. Mg(2+) serves as cofactor.

It localises to the nucleus. The enzyme catalyses DNA(n) + a 2'-deoxyribonucleoside 5'-triphosphate = DNA(n+1) + diphosphate. Template-independent DNA polymerase which catalyzes the random addition of deoxynucleoside 5'-triphosphate to the 3'-end of a DNA initiator. One of the in vivo functions of this enzyme is the addition of nucleotides at the junction (N region) of rearranged Ig heavy chain and T-cell receptor gene segments during the maturation of B- and T-cells. This chain is DNA nucleotidylexotransferase (DNTT), found in Monodelphis domestica (Gray short-tailed opossum).